The following is a 266-amino-acid chain: Tryptophan synthase alpha chain (266 aa).

Residues E49 and D60 each act as proton acceptor in the active site.

It belongs to the TrpA family. As to quaternary structure, tetramer of two alpha and two beta chains.

It catalyses the reaction (1S,2R)-1-C-(indol-3-yl)glycerol 3-phosphate + L-serine = D-glyceraldehyde 3-phosphate + L-tryptophan + H2O. It participates in amino-acid biosynthesis; L-tryptophan biosynthesis; L-tryptophan from chorismate: step 5/5. Functionally, the alpha subunit is responsible for the aldol cleavage of indoleglycerol phosphate to indole and glyceraldehyde 3-phosphate. In Shewanella amazonensis (strain ATCC BAA-1098 / SB2B), this protein is Tryptophan synthase alpha chain.